Consider the following 97-residue polypeptide: MKKRGSRSLAQVIRCKTGKYFPASVESGTKKEKKHHYSTASKEKEVLRKRAAEFDVLVRSLLNKQMPKNPDQILVFTYQKGFVETDLHNFGRYSVKL.

This chain is Late transcription unit B protein (ltuB), found in Chlamydia muridarum (strain MoPn / Nigg).